A 101-amino-acid polypeptide reads, in one-letter code: Ubiquitin-related modifier 1 (101 aa).

Gly-101 bears the 1-thioglycine mark. A Glycyl lysine isopeptide (Gly-Lys) (interchain with K-? in acceptor proteins) cross-link involves residue Gly-101.

Belongs to the URM1 family. In terms of processing, C-terminal thiocarboxylation occurs in 2 steps, it is first acyl-adenylated (-COAMP) via the hesA/moeB/thiF part of UBA4, then thiocarboxylated (-COSH) via the rhodanese domain of UBA4.

Its subcellular location is the cytoplasm. The protein operates within tRNA modification; 5-methoxycarbonylmethyl-2-thiouridine-tRNA biosynthesis. In terms of biological role, acts as a sulfur carrier required for 2-thiolation of mcm(5)S(2)U at tRNA wobble positions of cytosolic tRNA(Lys), tRNA(Glu) and tRNA(Gln). Serves as sulfur donor in tRNA 2-thiolation reaction by being thiocarboxylated (-COSH) at its C-terminus by the MOCS3 homolog UBA4. The sulfur is then transferred to tRNA to form 2-thiolation of mcm(5)S(2)U. Prior mcm(5) tRNA modification by the elongator complex is required for 2-thiolation. Also acts as a ubiquitin-like protein (UBL) that is covalently conjugated via an isopeptide bond to lysine residues of target proteins such as AHP1. The thiocarboxylated form serves as substrate for conjugation and oxidative stress specifically induces the formation of UBL-protein conjugates. This is Ubiquitin-related modifier 1 from Debaryomyces hansenii (strain ATCC 36239 / CBS 767 / BCRC 21394 / JCM 1990 / NBRC 0083 / IGC 2968) (Yeast).